A 104-amino-acid polypeptide reads, in one-letter code: Disrupted in renal carcinoma protein 1 (104 aa).

Positions 1–23 are disordered; the sequence is MPEAHMQPAKLQTSLPTTDHGSK. Residues 10-19 are compositionally biased toward polar residues; it reads KLQTSLPTTD.

In terms of tissue distribution, expressed at low steady-state level in adult placenta, testis, ovary, prostate, fetal kidney, spleen and skeletal muscle.

This Homo sapiens (Human) protein is Disrupted in renal carcinoma protein 1 (DIRC1).